We begin with the raw amino-acid sequence, 371 residues long: Flagellar P-ring protein (371 aa).

Residues 1–21 (MSRSFFATVLGLALAAMTVMA) form the signal peptide.

The protein belongs to the FlgI family. As to quaternary structure, the basal body constitutes a major portion of the flagellar organelle and consists of four rings (L,P,S, and M) mounted on a central rod.

Its subcellular location is the periplasm. The protein localises to the bacterial flagellum basal body. Assembles around the rod to form the L-ring and probably protects the motor/basal body from shearing forces during rotation. The polypeptide is Flagellar P-ring protein (Caulobacter sp. (strain K31)).